Reading from the N-terminus, the 501-residue chain is Mitogen-activated protein kinase MKC1 (501 aa).

The Protein kinase domain maps to 28 to 339; the sequence is FKIVKELGHG…VRDALNHKYL (312 aa). ATP is bound by residues 34–42 and Lys74; that span reads LGHGAYGIV. Asp174 serves as the catalytic Proton acceptor. Residue Thr211 is modified to Phosphothreonine. The TXY motif lies at 211–213; the sequence is TEY. Phosphotyrosine is present on Tyr213. Positions 400 to 450 are disordered; it reads MQKREEQRQEEEEKELLEQQRQFPAQESMDISQTPYNNLETNIGTPQVEDD. The span at 422–444 shows a compositional bias: polar residues; it reads FPAQESMDISQTPYNNLETNIGT.

It belongs to the protein kinase superfamily. CMGC Ser/Thr protein kinase family. MAP kinase subfamily. Mg(2+) serves as cofactor. In terms of processing, dually phosphorylated on Thr-211 and Tyr-213, which activates the enzyme.

The enzyme catalyses L-seryl-[protein] + ATP = O-phospho-L-seryl-[protein] + ADP + H(+). It carries out the reaction L-threonyl-[protein] + ATP = O-phospho-L-threonyl-[protein] + ADP + H(+). With respect to regulation, activated by tyrosine and threonine phosphorylation. This is Mitogen-activated protein kinase MKC1 (MKC1) from Candida albicans (Yeast).